The primary structure comprises 174 residues: Peptide methionine sulfoxide reductase MsrA (174 aa).

Residue Cys10 is part of the active site.

This sequence belongs to the MsrA Met sulfoxide reductase family.

The enzyme catalyses L-methionyl-[protein] + [thioredoxin]-disulfide + H2O = L-methionyl-(S)-S-oxide-[protein] + [thioredoxin]-dithiol. The catalysed reaction is [thioredoxin]-disulfide + L-methionine + H2O = L-methionine (S)-S-oxide + [thioredoxin]-dithiol. Functionally, has an important function as a repair enzyme for proteins that have been inactivated by oxidation. Catalyzes the reversible oxidation-reduction of methionine sulfoxide in proteins to methionine. This chain is Peptide methionine sulfoxide reductase MsrA, found in Paenarthrobacter aurescens (strain TC1).